Reading from the N-terminus, the 607-residue chain is Elongation factor 4 (607 aa).

One can recognise a tr-type G domain in the interval 11–193 (KNIRNFSIIA…KIVETIPAPS (183 aa)). GTP is bound by residues 23-28 (DHGKST) and 140-143 (NKID).

This sequence belongs to the TRAFAC class translation factor GTPase superfamily. Classic translation factor GTPase family. LepA subfamily.

It localises to the cell membrane. It carries out the reaction GTP + H2O = GDP + phosphate + H(+). Required for accurate and efficient protein synthesis under certain stress conditions. May act as a fidelity factor of the translation reaction, by catalyzing a one-codon backward translocation of tRNAs on improperly translocated ribosomes. Back-translocation proceeds from a post-translocation (POST) complex to a pre-translocation (PRE) complex, thus giving elongation factor G a second chance to translocate the tRNAs correctly. Binds to ribosomes in a GTP-dependent manner. In Staphylococcus carnosus (strain TM300), this protein is Elongation factor 4.